We begin with the raw amino-acid sequence, 139 residues long: Actin-depolymerizing factor 1 (139 aa).

Positions 5 to 139 constitute an ADF-H domain; it reads ASGMAVHDDC…GLDVIQSRAN (135 aa).

Belongs to the actin-binding proteins ADF family.

In terms of biological role, actin-depolymerizing protein. Severs actin filaments (F-actin) and binds to actin monomers. This is Actin-depolymerizing factor 1 (ADF1) from Petunia hybrida (Petunia).